A 290-amino-acid polypeptide reads, in one-letter code: ATP synthase gamma chain (290 aa).

This sequence belongs to the ATPase gamma chain family. As to quaternary structure, F-type ATPases have 2 components, CF(1) - the catalytic core - and CF(0) - the membrane proton channel. CF(1) has five subunits: alpha(3), beta(3), gamma(1), delta(1), epsilon(1). CF(0) has three main subunits: a, b and c.

The protein localises to the cell inner membrane. Its function is as follows. Produces ATP from ADP in the presence of a proton gradient across the membrane. The gamma chain is believed to be important in regulating ATPase activity and the flow of protons through the CF(0) complex. The sequence is that of ATP synthase gamma chain from Delftia acidovorans (strain DSM 14801 / SPH-1).